The chain runs to 1507 residues: DDB1- and CUL4-associated factor 1 (1507 aa).

A protein kinase-like region spans residues 141–500 (QPLRTYSTGL…STLEILNLED (360 aa)). Serine 202 and serine 255 each carry phosphoserine. Residues 242–288 (HLDSGHKTSSRVNSTTKPEDGGLKKNKSAKQGDRENFRKAKQKLGFS) form a disordered region. Positions 562 to 593 (SYTHEQIVEMMEFLIEYGPAQLYWEPAEVFLK) constitute a Chromo domain. Lysine 701 is subject to N6-acetyllysine. Phosphoserine is present on serine 828. The LisH domain occupies 846 to 878 (PEKELLLLIRNHLISKGLGETATVLTKEADLPM). At threonine 888 the chain carries Phosphothreonine. A phosphoserine mark is found at serine 895 and serine 898. Positions 917 to 947 (AAVGASAPSAPTAHPQPRPPQGPLALPGPSY) are disordered. Phosphoserine occurs at positions 979 and 1000. WD repeat units lie at residues 1091–1130 (EDES…EEAS), 1133–1174 (CHNS…DMKH), 1176–1213 (FTED…KLLT), 1215–1247 (FNPD…WDVR), and 1248–1290 (SAQA…LLHT). The interval 1091–1290 (EDESGFTCCA…DLRTFHLLHT (200 aa)) is WD repeat-like region. 2 consecutive short sequence motifs (DWD box) follow at residues 1242–1249 (VLWDVRSA) and 1278–1285 (EIWDLRTF). Serine 1328 is modified (phosphoserine). A disordered region spans residues 1393-1507 (RLAEDEDEEE…EDDIILSLNE (115 aa)). Composition is skewed to acidic residues over residues 1396 to 1483 (EDED…EEVE) and 1490 to 1501 (DSSDNSDLEDDI). The interaction with NF2 stretch occupies residues 1418–1507 (DDDTDDLDEL…EDDIILSLNE (90 aa)).

It belongs to the VPRBP/DCAF1 family. In terms of assembly, component of the DCX (DDB1-CUL4-X-box) E3 ubiquitin-protein ligase complex, named CUL4A-RBX1-DDB1-DCAF1/VPRBP complex. Interacts with DDB1; the interaction is direct. Also forms a ternary complex with DDA1 and DDB1. Interacts with NF2 (via FERM domain). Component of the EDVP complex, a E3 ligase complex containing DYRK2, EDD/UBR5, DDB1 and DCAF1. Interacts with DYRK2; the interaction is direct. Interacts with RAG1; the interaction is direct. Interacts with LLGL1 and LLGL2. Interacts with histone H3. Interacts with ESR1 and LATS1; probably recruited by LATS1 to promote ESR1 ubiquitination and ubiquitin-mediated proteasomal degradation. Directly interacts with TET1, TET2 and TET3 (via C-terminus). Interacts with CEP78; promoting DCAF1 localization to centrosomes. As to quaternary structure, (Microbial infection) Interacts with HIV-1 virus Vpr protein; the interaction is direct. (Microbial infection) Interacts with HIV-2 virus Vpx protein; the interaction is direct and the complex recruits SAMHD1 to promote its ubiquitin-dependent proteasomal degradation. In terms of assembly, (Microbial infection) Interacts (via C-terminus) with human cytomegalovirus protein UL35; this interaction induces the accumulation of cells in the G2 phase of the cell cycle. As to expression, ubiquitously expressed.

It is found in the cytoplasm. Its subcellular location is the nucleus. The protein localises to the cytoskeleton. It localises to the microtubule organizing center. The protein resides in the centrosome. The catalysed reaction is L-seryl-[protein] + ATP = O-phospho-L-seryl-[protein] + ADP + H(+). It catalyses the reaction L-threonyl-[protein] + ATP = O-phospho-L-threonyl-[protein] + ADP + H(+). Its pathway is protein modification; protein ubiquitination. In terms of biological role, acts both as a substrate recognition component of E3 ubiquitin-protein ligase complexes and as an atypical serine/threonine-protein kinase, playing key roles in various processes such as cell cycle, telomerase regulation and histone modification. Probable substrate-specific adapter of a DCX (DDB1-CUL4-X-box) E3 ubiquitin-protein ligase complex, named CUL4A-RBX1-DDB1-DCAF1/VPRBP complex, which mediates ubiquitination and proteasome-dependent degradation of proteins such as NF2. Involved in the turnover of methylated proteins: recognizes and binds methylated proteins via its chromo domain, leading to ubiquitination of target proteins by the RBX1-DDB1-DCAF1/VPRBP complex. The CUL4A-RBX1-DDB1-DCAF1/VPRBP complex is also involved in B-cell development: DCAF1 is recruited by RAG1 to ubiquitinate proteins, leading to limit error-prone repair during V(D)J recombination. Also part of the EDVP complex, an E3 ligase complex that mediates ubiquitination of proteins such as TERT, leading to TERT degradation and telomerase inhibition. The EDVP complex also mediates ubiquitination and degradation of CCP110. Also acts as an atypical serine/threonine-protein kinase that specifically mediates phosphorylation of 'Thr-120' of histone H2A (H2AT120ph) in a nucleosomal context, thereby repressing transcription. H2AT120ph is present in the regulatory region of many tumor suppresor genes, down-regulates their transcription and is present at high level in a number of tumors. Involved in JNK-mediated apoptosis during cell competition process via its interaction with LLGL1 and LLGL2. By acting on TET dioxygenses, essential for oocyte maintenance at the primordial follicle stage, hence essential for female fertility. (Microbial infection) In case of infection by HIV-1 virus, it is recruited by HIV-1 Vpr in order to hijack the CUL4A-RBX1-DDB1-DCAF1/VPRBP function leading to arrest the cell cycle in G2 phase, and also to protect the viral protein from proteasomal degradation by another E3 ubiquitin ligase. The HIV-1 Vpr protein hijacks the CUL4A-RBX1-DDB1-DCAF1/VPRBP complex to promote ubiquitination and degradation of proteins such as TERT and ZIP/ZGPAT. Functionally, (Microbial infection) In case of infection by HIV-2 virus, it is recruited by HIV-2 Vpx in order to hijack the CUL4A-RBX1-DDB1-DCAF1/VPRBP function leading to enhanced efficiency of macrophage infection and promotion of the replication of cognate primate lentiviruses in cells of monocyte/macrophage lineage. In Homo sapiens (Human), this protein is DDB1- and CUL4-associated factor 1.